The sequence spans 337 residues: Tryptophan--tRNA ligase (337 aa).

ATP-binding positions include 11-13 and 19-20; these read QPT and GN. Positions 12 to 20 match the 'HIGH' region motif; that stretch reads PTGALHLGN. L-tryptophan is bound at residue Asp-135. ATP-binding positions include 147 to 149, Val-191, and 200 to 204; these read GED and KMSKS. A 'KMSKS' region motif is present at residues 200–204; the sequence is KMSKS.

The protein belongs to the class-I aminoacyl-tRNA synthetase family. In terms of assembly, homodimer.

The protein resides in the cytoplasm. It carries out the reaction tRNA(Trp) + L-tryptophan + ATP = L-tryptophyl-tRNA(Trp) + AMP + diphosphate + H(+). Functionally, catalyzes the attachment of tryptophan to tRNA(Trp). In Prochlorococcus marinus (strain MIT 9313), this protein is Tryptophan--tRNA ligase.